The sequence spans 60 residues: Toxin S4C8 (60 aa).

4 disulfide bridges follow: Cys-3–Cys-22, Cys-17–Cys-39, Cys-41–Cys-52, and Cys-53–Cys-58. Residues 41–48 form an important for binding to L-type calcium channels region; sequence CPTAMWPY.

Belongs to the three-finger toxin family. Short-chain subfamily. L-type calcium blocker sub-subfamily. Expressed by the venom gland.

The protein resides in the secreted. Its function is as follows. This specific blocker of the L-type calcium channel (Cav1/CACNA1) is a smooth muscle relaxant and an inhibitor of cardiac contractions. This chain is Toxin S4C8, found in Dendroaspis jamesoni kaimosae (Eastern Jameson's mamba).